A 123-amino-acid polypeptide reads, in one-letter code: UPF0102 protein mma_0204 (123 aa).

Belongs to the UPF0102 family.

The polypeptide is UPF0102 protein mma_0204 (Janthinobacterium sp. (strain Marseille) (Minibacterium massiliensis)).